Reading from the N-terminus, the 189-residue chain is GMP synthase [glutamine-hydrolyzing] subunit A (189 aa).

Residues 1–189 (MIVILNNGGQ…CKKCGFEFEE (189 aa)) form the Glutamine amidotransferase type-1 domain. Catalysis depends on C76, which acts as the Nucleophile. Catalysis depends on residues H163 and E165.

As to quaternary structure, heterodimer composed of a glutamine amidotransferase subunit (A) and a GMP-binding subunit (B).

It carries out the reaction XMP + L-glutamine + ATP + H2O = GMP + L-glutamate + AMP + diphosphate + 2 H(+). The protein operates within purine metabolism; GMP biosynthesis; GMP from XMP (L-Gln route): step 1/1. Its function is as follows. Catalyzes the synthesis of GMP from XMP. The chain is GMP synthase [glutamine-hydrolyzing] subunit A from Methanococcus maripaludis (strain C7 / ATCC BAA-1331).